Reading from the N-terminus, the 84-residue chain is Cell division topological specificity factor (84 aa).

It belongs to the MinE family.

In terms of biological role, prevents the cell division inhibition by proteins MinC and MinD at internal division sites while permitting inhibition at polar sites. This ensures cell division at the proper site by restricting the formation of a division septum at the midpoint of the long axis of the cell. This Rhodopseudomonas palustris (strain BisA53) protein is Cell division topological specificity factor.